Reading from the N-terminus, the 484-residue chain is Probable cytosol aminopeptidase (484 aa).

Residues Lys256 and Asp261 each contribute to the Mn(2+) site. Residue Lys268 is part of the active site. Asp279, Asp338, and Glu340 together coordinate Mn(2+). The active site involves Arg342.

This sequence belongs to the peptidase M17 family. It depends on Mn(2+) as a cofactor.

It localises to the cytoplasm. It carries out the reaction Release of an N-terminal amino acid, Xaa-|-Yaa-, in which Xaa is preferably Leu, but may be other amino acids including Pro although not Arg or Lys, and Yaa may be Pro. Amino acid amides and methyl esters are also readily hydrolyzed, but rates on arylamides are exceedingly low.. It catalyses the reaction Release of an N-terminal amino acid, preferentially leucine, but not glutamic or aspartic acids.. Its function is as follows. Presumably involved in the processing and regular turnover of intracellular proteins. Catalyzes the removal of unsubstituted N-terminal amino acids from various peptides. In Methylibium petroleiphilum (strain ATCC BAA-1232 / LMG 22953 / PM1), this protein is Probable cytosol aminopeptidase.